We begin with the raw amino-acid sequence, 222 residues long: Small ribosomal subunit protein uS3 (222 aa).

One can recognise a KH type-2 domain in the interval 39 to 108 (IRRHIKEKLY…TISLDIKEIK (70 aa)).

The protein belongs to the universal ribosomal protein uS3 family. As to quaternary structure, part of the 30S ribosomal subunit. Forms a tight complex with proteins S10 and S14.

Functionally, binds the lower part of the 30S subunit head. Binds mRNA in the 70S ribosome, positioning it for translation. In Caldicellulosiruptor bescii (strain ATCC BAA-1888 / DSM 6725 / KCTC 15123 / Z-1320) (Anaerocellum thermophilum), this protein is Small ribosomal subunit protein uS3.